Reading from the N-terminus, the 314-residue chain is Olfactory receptor 1E2 (314 aa).

At 1-25 (MMGQNQTSISDFLLLGLPIQPEQQN) the chain is on the extracellular side. Asn-5 is a glycosylation site (N-linked (GlcNAc...) asparagine). Residues 26–49 (LCYALFLAMYLTTLLGNLLIIVLI) traverse the membrane as a helical segment. Residues 50–57 (RLDSHLHT) lie on the Cytoplasmic side of the membrane. Residues 58–79 (PMYLFLSNLSFSDLCFSSVTIP) form a helical membrane-spanning segment. The Extracellular portion of the chain corresponds to 80–100 (KLLQNMQNQDPSIPYADCLTQ). Residues Cys-97 and Cys-189 are joined by a disulfide bond. The helical transmembrane segment at 101-120 (MHFFLLFGDLESFLLVAMAY) threads the bilayer. The Cytoplasmic portion of the chain corresponds to 121–139 (DRYVAICFPLHYTAIMSPM). Residues 140-158 (LCLSVVALSWVLTTFHAML) traverse the membrane as a helical segment. The Extracellular segment spans residues 159 to 196 (HTLLMARLCFCADNVIPHFFCDMSALLKLACSDTRVNE). The chain crosses the membrane as a helical span at residues 197 to 219 (WVIFIMGGLIVVIPFLLILGSYA). Residues 220-236 (RIVSSILKVPSFKGICK) lie on the Cytoplasmic side of the membrane. A helical membrane pass occupies residues 237 to 260 (ALSTCGSHLSVVSLFYGTVIGLYL). Topologically, residues 261-272 (CPSANSSTLKDT) are extracellular. Asn-265 carries N-linked (GlcNAc...) asparagine glycosylation. Residues 273–292 (VMAMMYTVVTPMLNPFIYSL) traverse the membrane as a helical segment. At 293–314 (RNRDMKGALERVICKRKNPFLL) the chain is on the cytoplasmic side.

It belongs to the G-protein coupled receptor 1 family.

It localises to the cell membrane. Functionally, odorant receptor. This is Olfactory receptor 1E2 (OR1E2) from Pan troglodytes (Chimpanzee).